The primary structure comprises 226 residues: UPF0502 protein Gbem_0194 (226 aa).

The protein belongs to the UPF0502 family.

The protein is UPF0502 protein Gbem_0194 of Citrifermentans bemidjiense (strain ATCC BAA-1014 / DSM 16622 / JCM 12645 / Bem) (Geobacter bemidjiensis).